A 308-amino-acid chain; its full sequence is ATP synthase gamma chain (308 aa).

This sequence belongs to the ATPase gamma chain family. In terms of assembly, F-type ATPases have 2 components, CF(1) - the catalytic core - and CF(0) - the membrane proton channel. CF(1) has five subunits: alpha(3), beta(3), gamma(1), delta(1), epsilon(1). CF(0) has three main subunits: a, b and c.

The protein localises to the cell inner membrane. Produces ATP from ADP in the presence of a proton gradient across the membrane. The gamma chain is believed to be important in regulating ATPase activity and the flow of protons through the CF(0) complex. The sequence is that of ATP synthase gamma chain from Salinibacter ruber (strain DSM 13855 / M31).